A 42-amino-acid polypeptide reads, in one-letter code: Potassium channel toxin gamma-KTx 1.8 (42 aa).

Intrachain disulfides connect C5-C23, C11-C34, C20-C39, and C24-C41.

The protein belongs to the ergtoxin family. Gamma-KTx 1 subfamily. In terms of tissue distribution, expressed by the venom gland.

The protein resides in the secreted. Its function is as follows. Blocks in a reversible manner human and rat Kv11.1/KCNH2/ERG1 potassium channels. Also completely and irreversibly blocks rat Kv11.2/KCNH6/ERG2 and human Kv11.3/KCNH7/ERG3 channels. Also weakly inhibits Kir2.1/KCNJ2 and Kv1.2/KCNA2 potassium channels. The sequence is that of Potassium channel toxin gamma-KTx 1.8 from Centruroides elegans (Bark scorpion).